Consider the following 113-residue polypeptide: Histone H3-8 (113 aa).

Basic residues predominate over residues Asn-1 to Arg-17. Positions Asn-1–His-31 are disordered.

The protein belongs to the histone H3 family. As to quaternary structure, the nucleosome is a histone octamer containing two molecules each of H2A, H2B, H3 and H4 assembled in one H3-H4 heterotetramer and two H2A-H2B heterodimers. The octamer wraps approximately 147 bp of DNA.

It is found in the nucleus. Its subcellular location is the chromosome. Its function is as follows. Core component of nucleosome. Nucleosomes wrap and compact DNA into chromatin, limiting DNA accessibility to the cellular machineries which require DNA as a template. Histones thereby play a central role in transcription regulation, DNA repair, DNA replication and chromosomal stability. DNA accessibility is regulated via a complex set of post-translational modifications of histones, also called histone code, and nucleosome remodeling. In Stylonychia lemnae (Ciliate), this protein is Histone H3-8 (H3-8).